The primary structure comprises 394 residues: G2/mitotic-specific cyclin-B (394 aa).

The tract at residues 360–394 is disordered; the sequence is QSHPSPNSRLDQEEDMASSKFMSDQQATQELKSIR. Residues 379-394 show a composition bias toward polar residues; the sequence is KFMSDQQATQELKSIR.

This sequence belongs to the cyclin family. Cyclin AB subfamily. As to quaternary structure, interacts with the CDK1 protein kinase to form a serine/threonine kinase holoenzyme complex also known as maturation promoting factor (MPF). The cyclin subunit imparts substrate specificity to the complex.

In terms of biological role, essential for the control of the cell cycle at the G2/M (mitosis) transition. This Patiria pectinifera (Starfish) protein is G2/mitotic-specific cyclin-B.